The chain runs to 291 residues: Acetyl-coenzyme A carboxylase carboxyl transferase subunit beta (291 aa).

The CoA carboxyltransferase N-terminal domain occupies 23–291 (VYTKDPVSGE…TPASASVAKS (269 aa)).

Belongs to the AccD/PCCB family. In terms of assembly, acetyl-CoA carboxylase is a heterohexamer composed of biotin carboxyl carrier protein (AccB), biotin carboxylase (AccC) and two subunits each of ACCase subunit alpha (AccA) and ACCase subunit beta (AccD).

It is found in the cytoplasm. The catalysed reaction is N(6)-carboxybiotinyl-L-lysyl-[protein] + acetyl-CoA = N(6)-biotinyl-L-lysyl-[protein] + malonyl-CoA. It participates in lipid metabolism; malonyl-CoA biosynthesis; malonyl-CoA from acetyl-CoA: step 1/1. Component of the acetyl coenzyme A carboxylase (ACC) complex. Biotin carboxylase (BC) catalyzes the carboxylation of biotin on its carrier protein (BCCP) and then the CO(2) group is transferred by the transcarboxylase to acetyl-CoA to form malonyl-CoA. This is Acetyl-coenzyme A carboxylase carboxyl transferase subunit beta from Opitutus terrae (strain DSM 11246 / JCM 15787 / PB90-1).